Consider the following 655-residue polypeptide: RNA-binding protein EWS (655 aa).

Positions 1 to 285 (MASTDYSTYS…GVYGQESGGF (285 aa)) are EAD (Gln/Pro/Thr-rich). 31 tandem repeats follow at residues 8-16 (TYSQAAAQQ), 17-27 (GYSAYTAQPTQ), 28-34 (GYAQTTQ), 35-42 (AYGQQSYG), 43-50 (TYGQPTDV), 51-59 (SYTQAQTTA), 60-68 (TYGQTAYAT), 69-75 (SYGQPPT), 76-84 (GYSTPTAPQ), 85-91 (AYSQPVQ), 92-110 (GYGTGTYDSTTATVTTTQA), 111-116 (SYAAQT), 117-125 (AYGTQPAYP), 126-156 (TYGQQPTATAPTRPQDGNKPAETSQPQSSTG), 157-163 (GYNQPSL), 164-170 (GYGQSNY), 171-177 (SYPQVPG), 178-188 (SYPMQPVTAPP), 189-193 (SYPPT), 194-201 (SYSSSQPT), 202-206 (SYDQS), 207-212 (SYSQQN), 213-218 (TYGQPS), 219-224 (SYGQQS), 225-230 (SYGQQS), 231-238 (SYGQQPPT), 239-245 (SYPPQTG), 246-252 (SYSQAPS), 253-259 (QYSQQSS), 260-276 (SYGQQSSFRQDHPSSMG), and 277-285 (VYGQESGGF). A 31 X approximate tandem repeats region spans residues 8 to 285 (TYSQAAAQQG…GVYGQESGGF (278 aa)). A disordered region spans residues 121–350 (QPAYPTYGQQ…EGPDLDLGLP (230 aa)). 2 stretches are compositionally biased toward polar residues: residues 127–137 (YGQQPTATAPT) and 146–172 (AETSQPQSSTGGYNQPSLGYGQSNYSY). Low complexity predominate over residues 192-266 (PTSYSSSQPT…QSSSYGQQSS (75 aa)). In terms of domain architecture, IQ spans 256-285 (QQSSSYGQQSSFRQDHPSSMGVYGQESGGF). Residue serine 266 is modified to Phosphoserine; by PKC. Arginine 300, arginine 302, arginine 304, arginine 309, arginine 314, arginine 317, and arginine 321 each carry asymmetric dimethylarginine. Residues 308-334 (DRGGMSRGGRGGGRGGLGAGERGGFNK) are compositionally biased toward gly residues. A compositionally biased stretch (low complexity) spans 335–350 (PGGPMDEGPDLDLGLP). The RRM domain maps to 360–446 (SAIYVQGLND…SKLKVSLARK (87 aa)). Lysine 438 carries the post-translational modification N6-acetyllysine. 2 disordered regions span residues 447-524 (KPPM…WQCP) and 544-655 (APKP…DRPY). Residues arginine 454 and arginine 463 each carry the asymmetric dimethylarginine modification. An Asymmetric dimethylarginine; alternate modification is found at arginine 470. Arginine 470 bears the Omega-N-methylarginine; alternate mark. A compositionally biased stretch (gly residues) spans 471 to 489 (GGPGGPGGPGGPMGRMGGR). At arginine 485 the chain carries Omega-N-methylarginine. The residue at position 489 (arginine 489) is an Asymmetric dimethylarginine; by PRMT8. Residues arginine 493, arginine 499, and arginine 502 each carry the asymmetric dimethylarginine modification. An Asymmetric dimethylarginine; alternate modification is found at arginine 505. Arginine 505 is modified (omega-N-methylarginine; alternate). The segment at 517-548 (RAGDWQCPNPGCGNQNFAWRTECNQCKAPKPE) adopts a RanBP2-type zinc-finger fold. Pro residues predominate over residues 550–559 (FLPPPFPPPG). Asymmetric dimethylarginine is present on residues arginine 562 and arginine 564. A compositionally biased stretch (gly residues) spans 565–590 (GGPGGMRGGRGGLMDRGGPGGMFRGG). Residue arginine 571 is modified to Asymmetric dimethylarginine; alternate; by PRMT8. Position 571 is an omega-N-methylarginine; alternate; by PRMT8 (arginine 571). An asymmetric dimethylarginine mark is found at arginine 574, arginine 580, arginine 588, and arginine 591. A compositionally biased stretch (basic and acidic residues) spans 591-605 (RGGDRGGFRGGRGMD). Arginine 595 is modified (asymmetric dimethylarginine; alternate; by PRMT8). Arginine 595 carries the omega-N-methylarginine; alternate; by PRMT8 modification. Asymmetric dimethylarginine is present on arginine 599. Position 602 is an asymmetric dimethylarginine; by PRMT8 (arginine 602). Position 606 is an asymmetric dimethylarginine; alternate; by PRMT8 (arginine 606). An Omega-N-methylarginine; alternate; by PRMT8 modification is found at arginine 606. Positions 606 to 617 (RGGFGGGRRGGP) are enriched in gly residues. Asymmetric dimethylarginine; alternate is present on arginine 614. At arginine 614 the chain carries Omega-N-methylarginine; alternate. 2 positions are modified to asymmetric dimethylarginine: arginine 632 and arginine 635. The short motif at 638-655 (PGKMDKGEHRQERRDRPY) is the Nuclear localization signal element. Positions 640–655 (KMDKGEHRQERRDRPY) are enriched in basic and acidic residues.

It belongs to the RRM TET family. In terms of assembly, binds RNA, POLR2C, SF1 and calmodulin. Interacts with PTK2B and TDRD3. Forms a complex with REC8, PRDM9, SYCP3 and SYCP1; complex formation is dependent of phosphorylated form of REC8 and requires PRDM9 bound to hotspot DNA; EWSR1 joins PRDM9 with the chromosomal axis through REC8. In terms of processing, phosphorylated; calmodulin-binding inhibits phosphorylation of Ser-266. Highly methylated on arginine residues. Methylation is mediated by PRMT1 and, at lower level by PRMT8.

It localises to the nucleus. The protein resides in the cytoplasm. The protein localises to the cell membrane. Its function is as follows. Binds to ssRNA containing the consensus sequence 5'-AGGUAA-3'. Might function as a transcriptional repressor. This is RNA-binding protein EWS (Ewsr1) from Mus musculus (Mouse).